A 444-amino-acid polypeptide reads, in one-letter code: Trigger factor (444 aa).

Residues 165–250 form the PPIase FKBP-type domain; the sequence is GDFAKFDFEG…LHEIQELKIP (86 aa).

The protein belongs to the FKBP-type PPIase family. Tig subfamily.

The protein localises to the cytoplasm. The catalysed reaction is [protein]-peptidylproline (omega=180) = [protein]-peptidylproline (omega=0). Its function is as follows. Involved in protein export. Acts as a chaperone by maintaining the newly synthesized protein in an open conformation. Functions as a peptidyl-prolyl cis-trans isomerase. This chain is Trigger factor, found in Campylobacter jejuni subsp. jejuni serotype O:23/36 (strain 81-176).